Here is a 59-residue protein sequence, read N- to C-terminus: Zinc finger protein HVO_2753 (59 aa).

4 short sequence motifs (c(P)XCG motif) span residues 12–16 (CVSCG), 29–33 (CPDCG), 39–43 (CSKCR), and 51–55 (CPDCG). Zn(2+) is bound by residues C29 and C32. Zn(2+)-binding residues include C51 and C54.

Monomer in solution.

Zinc-binding protein that binds only one zinc ion. Is required for swarming and biofilm formation. In Haloferax volcanii (strain ATCC 29605 / DSM 3757 / JCM 8879 / NBRC 14742 / NCIMB 2012 / VKM B-1768 / DS2) (Halobacterium volcanii), this protein is Zinc finger protein HVO_2753.